A 339-amino-acid polypeptide reads, in one-letter code: Ketol-acid reductoisomerase (NADP(+)) (339 aa).

In terms of domain architecture, KARI N-terminal Rossmann spans 1–182 (MRVYYDRDAD…GGGRSGIIET (182 aa)). Residues 24–27 (YGSQ), lysine 48, serine 51, threonine 53, and 83–86 (DELQ) each bind NADP(+). Histidine 108 is an active-site residue. An NADP(+)-binding site is contributed by glycine 134. The KARI C-terminal knotted domain occupies 183–328 (NFKEECETDL…AKLRAMMPWI (146 aa)). Mg(2+) is bound by residues aspartate 191, glutamate 195, glutamate 227, and glutamate 231. Serine 252 is a binding site for substrate.

The protein belongs to the ketol-acid reductoisomerase family. Requires Mg(2+) as cofactor.

It catalyses the reaction (2R)-2,3-dihydroxy-3-methylbutanoate + NADP(+) = (2S)-2-acetolactate + NADPH + H(+). It carries out the reaction (2R,3R)-2,3-dihydroxy-3-methylpentanoate + NADP(+) = (S)-2-ethyl-2-hydroxy-3-oxobutanoate + NADPH + H(+). It participates in amino-acid biosynthesis; L-isoleucine biosynthesis; L-isoleucine from 2-oxobutanoate: step 2/4. The protein operates within amino-acid biosynthesis; L-valine biosynthesis; L-valine from pyruvate: step 2/4. Involved in the biosynthesis of branched-chain amino acids (BCAA). Catalyzes an alkyl-migration followed by a ketol-acid reduction of (S)-2-acetolactate (S2AL) to yield (R)-2,3-dihydroxy-isovalerate. In the isomerase reaction, S2AL is rearranged via a Mg-dependent methyl migration to produce 3-hydroxy-3-methyl-2-ketobutyrate (HMKB). In the reductase reaction, this 2-ketoacid undergoes a metal-dependent reduction by NADPH to yield (R)-2,3-dihydroxy-isovalerate. The polypeptide is Ketol-acid reductoisomerase (NADP(+)) (Rhizobium meliloti (strain 1021) (Ensifer meliloti)).